We begin with the raw amino-acid sequence, 614 residues long: Chaperone protein DnaK (614 aa).

T176 is modified (phosphothreonine; by autocatalysis). The segment at 576–614 (YQQQQSQGGEAGAANGDASKKDDNTVDGDFHEVHDDDKK) is disordered. Residues 577 to 589 (QQQQSQGGEAGAA) show a composition bias toward low complexity. Residues 593-614 (ASKKDDNTVDGDFHEVHDDDKK) show a composition bias toward basic and acidic residues.

The protein belongs to the heat shock protein 70 family.

Its function is as follows. Acts as a chaperone. This chain is Chaperone protein DnaK, found in Fructilactobacillus sanfranciscensis (Lactobacillus sanfranciscensis).